The primary structure comprises 374 residues: Methylthioribose-1-phosphate isomerase (374 aa).

The Proton donor role is filled by Asp-251.

This sequence belongs to the eIF-2B alpha/beta/delta subunits family. MtnA subfamily.

The protein localises to the cytoplasm. It is found in the nucleus. The catalysed reaction is 5-(methylsulfanyl)-alpha-D-ribose 1-phosphate = 5-(methylsulfanyl)-D-ribulose 1-phosphate. The protein operates within amino-acid biosynthesis; L-methionine biosynthesis via salvage pathway; L-methionine from S-methyl-5-thio-alpha-D-ribose 1-phosphate: step 1/6. Functionally, catalyzes the interconversion of methylthioribose-1-phosphate (MTR-1-P) into methylthioribulose-1-phosphate (MTRu-1-P). The polypeptide is Methylthioribose-1-phosphate isomerase (Oryza sativa subsp. indica (Rice)).